The sequence spans 949 residues: Bifunctional glutamine synthetase adenylyltransferase/adenylyl-removing enzyme (949 aa).

Residues 1-450 (MQNQGNKVLS…HFNATVGGTD (450 aa)) form an adenylyl removase region. An adenylyl transferase region spans residues 455–949 (NDHWTALFWN…IEIYNEILAI (495 aa)).

It belongs to the GlnE family. Mg(2+) is required as a cofactor.

The enzyme catalyses [glutamine synthetase]-O(4)-(5'-adenylyl)-L-tyrosine + phosphate = [glutamine synthetase]-L-tyrosine + ADP. It carries out the reaction [glutamine synthetase]-L-tyrosine + ATP = [glutamine synthetase]-O(4)-(5'-adenylyl)-L-tyrosine + diphosphate. Involved in the regulation of glutamine synthetase GlnA, a key enzyme in the process to assimilate ammonia. When cellular nitrogen levels are high, the C-terminal adenylyl transferase (AT) inactivates GlnA by covalent transfer of an adenylyl group from ATP to specific tyrosine residue of GlnA, thus reducing its activity. Conversely, when nitrogen levels are low, the N-terminal adenylyl removase (AR) activates GlnA by removing the adenylyl group by phosphorolysis, increasing its activity. The regulatory region of GlnE binds the signal transduction protein PII (GlnB) which indicates the nitrogen status of the cell. This Shewanella frigidimarina (strain NCIMB 400) protein is Bifunctional glutamine synthetase adenylyltransferase/adenylyl-removing enzyme.